The primary structure comprises 317 residues: Beta-ketoacyl-[acyl-carrier-protein] synthase III (317 aa).

Residues cysteine 112 and histidine 244 contribute to the active site. An ACP-binding region spans residues 245 to 249 (QANLR). Residue asparagine 274 is part of the active site.

This sequence belongs to the thiolase-like superfamily. FabH family. In terms of assembly, homodimer.

Its subcellular location is the cytoplasm. It catalyses the reaction malonyl-[ACP] + acetyl-CoA + H(+) = 3-oxobutanoyl-[ACP] + CO2 + CoA. It functions in the pathway lipid metabolism; fatty acid biosynthesis. In terms of biological role, catalyzes the condensation reaction of fatty acid synthesis by the addition to an acyl acceptor of two carbons from malonyl-ACP. Catalyzes the first condensation reaction which initiates fatty acid synthesis and may therefore play a role in governing the total rate of fatty acid production. Possesses both acetoacetyl-ACP synthase and acetyl transacylase activities. Its substrate specificity determines the biosynthesis of branched-chain and/or straight-chain of fatty acids. The polypeptide is Beta-ketoacyl-[acyl-carrier-protein] synthase III (Citrobacter koseri (strain ATCC BAA-895 / CDC 4225-83 / SGSC4696)).